The chain runs to 305 residues: UDP-N-acetylenolpyruvoylglucosamine reductase 2 (305 aa).

The FAD-binding PCMH-type domain maps to 33–197 (VGGKADVFVA…LEARFELEEG (165 aa)). The active site involves Arg-176. Ser-226 (proton donor) is an active-site residue. Glu-296 is an active-site residue.

The protein belongs to the MurB family. FAD serves as cofactor.

Its subcellular location is the cytoplasm. It carries out the reaction UDP-N-acetyl-alpha-D-muramate + NADP(+) = UDP-N-acetyl-3-O-(1-carboxyvinyl)-alpha-D-glucosamine + NADPH + H(+). The protein operates within cell wall biogenesis; peptidoglycan biosynthesis. Cell wall formation. The protein is UDP-N-acetylenolpyruvoylglucosamine reductase 2 of Bacillus cereus (strain ATCC 10987 / NRS 248).